We begin with the raw amino-acid sequence, 204 residues long: Tumor necrosis factor receptor superfamily member 26 (204 aa).

Positions 1–19 (MTRLRLLLLLGLLLRVAVC) are cleaved as a signal peptide. The Extracellular portion of the chain corresponds to 20–164 (SVNTITLCKI…SQCFCFSKPL (145 aa)). Disulfide bonds link Cys-27-Cys-38, Cys-39-Cys-52, Cys-42-Cys-61, Cys-64-Cys-79, Cys-82-Cys-95, Cys-85-Cys-103, Cys-105-Cys-120, Cys-123-Cys-135, and Cys-126-Cys-143. TNFR-Cys repeat units lie at residues 27-61 (CKIGEFKHENLCCLQCSAGTYLRNPCQENHNKSEC), 63-103 (PCDS…DRVC), and 104-143 (QCKQGTYCDSENCLERCHTCSSCPDGRVVRKCNATMDTVC). N-linked (GlcNAc...) asparagine glycosylation is present at Asn-57. Asn-136 is a glycosylation site (N-linked (GlcNAc...) asparagine). A helical transmembrane segment spans residues 165-185 (GIVVIIAAFIIIIGAVIILIL). At 186-204 (KIICYCKRGENIQLSSTML) the chain is on the cytoplasmic side.

As to expression, expressed in thymus and spleen. Detectable levels in lung.

The protein resides in the membrane. The protein is Tumor necrosis factor receptor superfamily member 26 (Tnfrsf26) of Mus musculus (Mouse).